Here is a 447-residue protein sequence, read N- to C-terminus: Rab GDP dissociation inhibitor alpha (447 aa).

Ser427 carries the phosphoserine modification.

It belongs to the Rab GDI family. As to quaternary structure, interacts with RHOH. Interacts with the non-phosphorylated forms of RAB1A, RAB3A, RAB5A, RAB5B, RAB5C, RAB8A, RAB8B, RAB10, RAB12, RAB35, and RAB43. Interacts with RAB3A.

It is found in the cytoplasm. The protein resides in the golgi apparatus. It localises to the trans-Golgi network. Functionally, regulates the GDP/GTP exchange reaction of most Rab proteins by inhibiting the dissociation of GDP from them, and the subsequent binding of GTP to them. Promotes the dissociation of GDP-bound Rab proteins from the membrane and inhibits their activation. Promotes the dissociation of RAB1A, RAB3A, RAB5A and RAB10 from membranes. This is Rab GDP dissociation inhibitor alpha (GDI1) from Bos taurus (Bovine).